The following is a 266-amino-acid chain: Hydroxymethylpyrimidine/phosphomethylpyrimidine kinase (266 aa).

Gln-43 contributes to the 4-amino-5-hydroxymethyl-2-methylpyrimidine binding site.

The protein belongs to the ThiD family.

The catalysed reaction is 4-amino-5-hydroxymethyl-2-methylpyrimidine + ATP = 4-amino-2-methyl-5-(phosphooxymethyl)pyrimidine + ADP + H(+). It catalyses the reaction 4-amino-2-methyl-5-(phosphooxymethyl)pyrimidine + ATP = 4-amino-2-methyl-5-(diphosphooxymethyl)pyrimidine + ADP. Its pathway is cofactor biosynthesis; thiamine diphosphate biosynthesis; 4-amino-2-methyl-5-diphosphomethylpyrimidine from 5-amino-1-(5-phospho-D-ribosyl)imidazole: step 2/3. The protein operates within cofactor biosynthesis; thiamine diphosphate biosynthesis; 4-amino-2-methyl-5-diphosphomethylpyrimidine from 5-amino-1-(5-phospho-D-ribosyl)imidazole: step 3/3. Catalyzes the phosphorylation of hydroxymethylpyrimidine phosphate (HMP-P) to HMP-PP, and of HMP to HMP-P. The protein is Hydroxymethylpyrimidine/phosphomethylpyrimidine kinase (thiD) of Rhizobium meliloti (strain 1021) (Ensifer meliloti).